A 40-amino-acid chain; its full sequence is Alpha-1B-glycoprotein (40 aa).

N-linked (GlcNAc...) asparagine glycosylation is present at Asn-23.

As to quaternary structure, interacts with CRISP3. In terms of tissue distribution, plasma.

Its subcellular location is the secreted. The sequence is that of Alpha-1B-glycoprotein (A1BG) from Sus scrofa (Pig).